We begin with the raw amino-acid sequence, 206 residues long: N-(5'-phosphoribosyl)anthranilate isomerase (206 aa).

The protein belongs to the TrpF family.

The enzyme catalyses N-(5-phospho-beta-D-ribosyl)anthranilate = 1-(2-carboxyphenylamino)-1-deoxy-D-ribulose 5-phosphate. Its pathway is amino-acid biosynthesis; L-tryptophan biosynthesis; L-tryptophan from chorismate: step 3/5. This is N-(5'-phosphoribosyl)anthranilate isomerase from Pseudomonas syringae pv. syringae (strain B728a).